The primary structure comprises 519 residues: Dihydropyrimidinase (519 aa).

Zn(2+)-binding residues include H67 and H69. S79 carries the post-translational modification Phosphoserine. K159 contributes to the Zn(2+) binding site. Residue K159 is modified to N6-carboxylysine. Y164 serves as a coordination point for substrate. Residues H192 and H248 each coordinate Zn(2+). N6-succinyllysine is present on K256. A Zn(2+)-binding site is contributed by D326. N347 is a substrate binding site. Phosphothreonine is present on T510.

This sequence belongs to the metallo-dependent hydrolases superfamily. Hydantoinase/dihydropyrimidinase family. In terms of assembly, homotetramer. Requires Zn(2+) as cofactor. In terms of processing, carboxylation allows a single lysine to coordinate two zinc ions.

It catalyses the reaction 5,6-dihydrouracil + H2O = 3-(carbamoylamino)propanoate + H(+). Functionally, catalyzes the second step of the reductive pyrimidine degradation, the reversible hydrolytic ring opening of dihydropyrimidines. Can catalyze the ring opening of 5,6-dihydrouracil to N-carbamyl-alanine and of 5,6-dihydrothymine to N-carbamyl-amino isobutyrate. This is Dihydropyrimidinase (Dpys) from Rattus norvegicus (Rat).